The primary structure comprises 159 residues: MMMDILMYLFETYIHSDAELQVEQDELEDELLRAGFQQKDIYKALVWLEELAALQQSDEHSAISTCIASASTRIYTASEMQRLDLECRGFLLFLEQINVLTTETREMVIDRVMGLETNEFELEDLKWIILMVLFNVPGNENAYTLMEELLYTKEQGILH.

This sequence belongs to the Smg family.

The polypeptide is Protein Smg homolog (Vibrio campbellii (strain ATCC BAA-1116)).